The following is a 256-amino-acid chain: Pyridoxine 5'-phosphate synthase (256 aa).

N10 provides a ligand contact to 3-amino-2-oxopropyl phosphate. Residue D12–H13 participates in 1-deoxy-D-xylulose 5-phosphate binding. Residue R21 participates in 3-amino-2-oxopropyl phosphate binding. Catalysis depends on H46, which acts as the Proton acceptor. R48 and H53 together coordinate 1-deoxy-D-xylulose 5-phosphate. The active-site Proton acceptor is E73. T103 lines the 1-deoxy-D-xylulose 5-phosphate pocket. H193 acts as the Proton donor in catalysis. 3-amino-2-oxopropyl phosphate-binding positions include G194 and G215 to H216.

It belongs to the PNP synthase family. As to quaternary structure, homooctamer; tetramer of dimers.

It is found in the cytoplasm. The catalysed reaction is 3-amino-2-oxopropyl phosphate + 1-deoxy-D-xylulose 5-phosphate = pyridoxine 5'-phosphate + phosphate + 2 H2O + H(+). It functions in the pathway cofactor biosynthesis; pyridoxine 5'-phosphate biosynthesis; pyridoxine 5'-phosphate from D-erythrose 4-phosphate: step 5/5. In terms of biological role, catalyzes the complicated ring closure reaction between the two acyclic compounds 1-deoxy-D-xylulose-5-phosphate (DXP) and 3-amino-2-oxopropyl phosphate (1-amino-acetone-3-phosphate or AAP) to form pyridoxine 5'-phosphate (PNP) and inorganic phosphate. This chain is Pyridoxine 5'-phosphate synthase, found in Zymomonas mobilis subsp. mobilis (strain ATCC 31821 / ZM4 / CP4).